A 353-amino-acid polypeptide reads, in one-letter code: MSLPLSLQTLVKKTVASQCLSIDEHCILKHCGLWWHDVPLKLCMDRGQIQIKSGFLGEDIDLHIALIIAVKENNYSLIKLFTEWGAHINYSLLSINTEHIRELCRQLGAKETLEDDDVFRIFTKIMHNKTSGRIILCHDIFMNNPNIENKFTIQLRGLICKRLWGLIEIKETDELNDLLVKYWYAKAVQYECKDAICFLEEKYTDLNEWRLKCLLYFNKIYELHEMYHKEKVQIDVHDMICLASTKDNNPLTIYYCYALGGNINQAMLTSIQYYNIGNIFFCIDLGGNAFEEGRAIAEQKGYNFLSHSLALDIFSSDASLPLNLKDPEEISSFLKDYKSKNLSIIWEYSHNIL.

It belongs to the asfivirus MGF 360 family.

Its function is as follows. Plays a role in virus cell tropism, and may be required for efficient virus replication in macrophages. The protein is Protein MGF 360-13L of Ornithodoros (relapsing fever ticks).